We begin with the raw amino-acid sequence, 443 residues long: tRNA modification GTPase MnmE (443 aa).

3 residues coordinate (6S)-5-formyl-5,6,7,8-tetrahydrofolate: R23, E82, and K121. The TrmE-type G domain maps to 215 to 364; the sequence is GTSIVLAGHP…LKQFIQKWIQ (150 aa). N225 lines the K(+) pocket. Residues 225 to 230, 244 to 250, and 269 to 272 each bind GTP; these read NAGKSS, TDIPGTT, and DSAG. S229 contacts Mg(2+). K(+) contacts are provided by T244, I246, and T249. Residue T250 participates in Mg(2+) binding. Residue K443 participates in (6S)-5-formyl-5,6,7,8-tetrahydrofolate binding.

It belongs to the TRAFAC class TrmE-Era-EngA-EngB-Septin-like GTPase superfamily. TrmE GTPase family. As to quaternary structure, homodimer. Heterotetramer of two MnmE and two MnmG subunits. K(+) is required as a cofactor.

It localises to the cytoplasm. In terms of biological role, exhibits a very high intrinsic GTPase hydrolysis rate. Involved in the addition of a carboxymethylaminomethyl (cmnm) group at the wobble position (U34) of certain tRNAs, forming tRNA-cmnm(5)s(2)U34. The sequence is that of tRNA modification GTPase MnmE from Chlamydia felis (strain Fe/C-56) (Chlamydophila felis).